The following is a 446-amino-acid chain: T-box transcription factor TBX19 (446 aa).

Positions Leu43–Asp216 form a DNA-binding region, T-box.

The protein localises to the nucleus. Its function is as follows. Transcriptional regulator involved in developmental processes. Can activate POMC gene expression and repress the alpha glycoprotein subunit and thyroid-stimulating hormone beta promoters. This Mus musculus (Mouse) protein is T-box transcription factor TBX19.